The sequence spans 217 residues: Cyclin-P2-1 (217 aa).

The protein belongs to the cyclin family. Cyclin U/P subfamily.

The chain is Cyclin-P2-1 (CYCP2-1) from Oryza sativa subsp. japonica (Rice).